The sequence spans 378 residues: Integrator complex assembly factor WDR73 (378 aa).

6 WD repeats span residues 73 to 113 (DFKV…VWQV), 121 to 163 (KAVS…VVDL), 167 to 205 (KTTYTSDVSDSEELSSLQVLDADTFAFCCASGRLGLVDT), 214 to 255 (NRSP…LLDP), 266 to 305 (QCPVSVPSPDPELLRVTWAPGLKNCLAISGFDGTVQVYDA), and 322 to 371 (EPLF…VWDW).

Belongs to the WD repeat WDR73 family. In terms of assembly, interacts with INTS9 and INTS11; the interaction is direct. Part of the multiprotein complex composed of BRAT1, WDR73, as well as integrator complex subunits INTS9 and INTS11. Expressed in kidney and brain. In the kidney, expressed in glomeruli, most probably in podocytes, and in tubules (at protein level). In the brain, expressed in the cerebellum, with high levels in Purkinje cells and their projecting axons, in the deep cerebellar nuclei and in pyramidal neurons of the cerebral cortex (at protein level). In the white matter, mainly present in astrocytes, but not in oligodendrocytes (at protein level). Also highly expressed in endothelial cells of cerebral capillaries (at protein level).

It is found in the cytoplasm. It localises to the cytoskeleton. The protein localises to the spindle. The protein resides in the spindle pole. Its subcellular location is the cleavage furrow. Functionally, component of a multiprotein complex required for the assembly of the RNA endonuclease module of the integrator complex. Associates with INTS9 and INTS11 in the cytoplasm, stabilizing the INTS9-INTS11 heterodimer and blocking the active site of INTS11. BRAT1 then joins the complex and plugs the active site of INTS11, leading to WDR73 release and nuclear import of INTS9 and INTS11. In Homo sapiens (Human), this protein is Integrator complex assembly factor WDR73.